The sequence spans 170 residues: Disulfide bond formation protein B (170 aa).

The Cytoplasmic portion of the chain corresponds to 1–14; it reads MNDSTLALRRERRL. The chain crosses the membrane as a helical span at residues 15–31; the sequence is LMLLGWVCIALLAGALY. Over 32 to 49 the chain is Periplasmic; it reads LQYVKNEDPCPLCIIQRY. C41 and C44 are disulfide-bonded. The chain crosses the membrane as a helical span at residues 50-64; the sequence is FFAAIGIFAFLAAGI. The Cytoplasmic portion of the chain corresponds to 65 to 71; it reads RNWRVIW. A helical transmembrane segment spans residues 72-89; it reads VFELLIAIAAAGGVGTAA. Over 90–144 the chain is Periplasmic; that stretch reads RHLSIQMNPGFSCGFDTLQPIVDSLPPAQWFPGMFKVAGLCETVYPPIFGILLPG. An intrachain disulfide couples C102 to C130. Residues 145–163 form a helical membrane-spanning segment; that stretch reads WALIGFAVILVAVASSLWR. Over 164–170 the chain is Cytoplasmic; that stretch reads HRRKLAG.

The protein belongs to the DsbB family.

It localises to the cell inner membrane. Functionally, required for disulfide bond formation in some periplasmic proteins. Acts by oxidizing the DsbA protein. The protein is Disulfide bond formation protein B of Burkholderia ambifaria (strain ATCC BAA-244 / DSM 16087 / CCUG 44356 / LMG 19182 / AMMD) (Burkholderia cepacia (strain AMMD)).